Reading from the N-terminus, the 244-residue chain is uncharacterized protein (244 aa).

This is an uncharacterized protein from Saccharomyces cerevisiae (strain ATCC 204508 / S288c) (Baker's yeast).